The following is a 113-amino-acid chain: Hydrogenase maturation factor HypA (113 aa).

Histidine 2 serves as a coordination point for Ni(2+). The Zn(2+) site is built by cysteine 73, cysteine 76, cysteine 89, and cysteine 92.

It belongs to the HypA/HybF family.

Functionally, involved in the maturation of [NiFe] hydrogenases. Required for nickel insertion into the metal center of the hydrogenase. The protein is Hydrogenase maturation factor HypA of Legionella pneumophila subsp. pneumophila (strain Philadelphia 1 / ATCC 33152 / DSM 7513).